The following is a 500-amino-acid chain: Hexokinase-3 (500 aa).

Residues 4–24 (VGLGVAVGCAAVTCAIAAALV) form a helical membrane-spanning segment. The region spanning 35–487 (RRAVALLREF…SGVGAALLAA (453 aa)) is the Hexokinase domain. The interval 90–222 (SGSEEGVYYS…GLNVRVTALV (133 aa)) is hexokinase small subdomain. The ADP site is built by glycine 104, threonine 105, and asparagine 106. D-glucose contacts are provided by threonine 188, lysine 189, asparagine 223, and aspartate 224. Positions 223-476 (NDTVGTLALG…RNVTLRVTED (254 aa)) are hexokinase large subdomain. Serine 247 contributes to the ADP binding site. D-glucose contacts are provided by asparagine 250, glutamate 278, and glutamate 309. Glycine 441 serves as a coordination point for ADP.

It belongs to the hexokinase family. In terms of tissue distribution, expressed in roots, leaves, flowers, immature seeds and seed coat. Expressed in young shoots, tiller buds, endosperm seven days after fertilization, and interconnecting tissues such as pulvini and nodes.

The protein localises to the mitochondrion outer membrane. The catalysed reaction is a D-hexose + ATP = a D-hexose 6-phosphate + ADP + H(+). It carries out the reaction D-fructose + ATP = D-fructose 6-phosphate + ADP + H(+). It catalyses the reaction D-glucose + ATP = D-glucose 6-phosphate + ADP + H(+). The protein operates within carbohydrate metabolism; hexose metabolism. It functions in the pathway carbohydrate degradation; glycolysis; D-glyceraldehyde 3-phosphate and glycerone phosphate from D-glucose: step 1/4. Functionally, fructose and glucose phosphorylating enzyme. Involved in the regulation of cell expansion in spikelet hulls, grain size, and gibberellin biosynthesis and homeostasis. The sequence is that of Hexokinase-3 from Oryza sativa subsp. japonica (Rice).